Reading from the N-terminus, the 76-residue chain is MKSGIHPDYHEINVIMTDGTEYKTRSCYAQPGATLRLDIDPKSHPAWTGVQRMLDTGGQVAKFNKKFGGLGRRAKA.

Belongs to the bacterial ribosomal protein bL31 family. Type A subfamily. Part of the 50S ribosomal subunit.

Functionally, binds the 23S rRNA. This Gluconacetobacter diazotrophicus (strain ATCC 49037 / DSM 5601 / CCUG 37298 / CIP 103539 / LMG 7603 / PAl5) protein is Large ribosomal subunit protein bL31.